Consider the following 1580-residue polypeptide: Pentafunctional AROM polypeptide (1580 aa).

The segment at 1-381 (MATPTVIKIL…HEQKASVVSN (381 aa)) is 3-dehydroquinate synthase. Residues 44–46 (DTT), 81–84 (EVSK), 114–116 (GGV), and aspartate 119 each bind NAD(+). Arginine 130 is a binding site for 7-phospho-2-dehydro-3-deoxy-D-arabino-heptonate. An NAD(+)-binding site is contributed by 139–140 (TT). 7-phospho-2-dehydro-3-deoxy-D-arabino-heptonate is bound by residues aspartate 146 and lysine 152. NAD(+) is bound at residue lysine 161. Asparagine 162 serves as a coordination point for 7-phospho-2-dehydro-3-deoxy-D-arabino-heptonate. Residues 179 to 182 (FLNT) and asparagine 190 contribute to the NAD(+) site. Glutamate 194 lines the Zn(2+) pocket. Lysine 247 serves as a coordination point for 7-phospho-2-dehydro-3-deoxy-D-arabino-heptonate. The active-site Proton acceptor; for 3-dehydroquinate synthase activity is glutamate 257. 7-phospho-2-dehydro-3-deoxy-D-arabino-heptonate is bound by residues 261–265 (RNLLN) and histidine 268. Histidine 268 contacts Zn(2+). Histidine 272 functions as the Proton acceptor; for 3-dehydroquinate synthase activity in the catalytic mechanism. Residues histidine 284 and lysine 353 each contribute to the 7-phospho-2-dehydro-3-deoxy-D-arabino-heptonate site. Residue histidine 284 participates in Zn(2+) binding. The tract at residues 394–838 (VSPGVPHALE…WDTLAQLFKA (445 aa)) is EPSP synthase. The active-site For EPSP synthase activity is the cysteine 820. Residues 857 to 1048 (ASLFIIGMRG…KKKPQSFFVS (192 aa)) are shikimate kinase. An ATP-binding site is contributed by 863-870 (GMRGAGKT). Residues 1049–1269 (LTLPDLRPSV…AAPGQLSAKE (221 aa)) are 3-dehydroquinase. The active-site Proton acceptor; for 3-dehydroquinate dehydratase activity is the histidine 1172. Lysine 1200 serves as the catalytic Schiff-base intermediate with substrate; for 3-dehydroquinate dehydratase activity. The shikimate dehydrogenase stretch occupies residues 1282-1580 (SKKFAIVGKP…AAVMNADADI (299 aa)).

The protein in the N-terminal section; belongs to the sugar phosphate cyclases superfamily. Dehydroquinate synthase family. In the 2nd section; belongs to the EPSP synthase family. It in the 3rd section; belongs to the shikimate kinase family. This sequence in the 4th section; belongs to the type-I 3-dehydroquinase family. The protein in the C-terminal section; belongs to the shikimate dehydrogenase family. Homodimer. It depends on Zn(2+) as a cofactor.

The protein resides in the cytoplasm. It carries out the reaction 7-phospho-2-dehydro-3-deoxy-D-arabino-heptonate = 3-dehydroquinate + phosphate. The enzyme catalyses 3-dehydroquinate = 3-dehydroshikimate + H2O. The catalysed reaction is shikimate + NADP(+) = 3-dehydroshikimate + NADPH + H(+). It catalyses the reaction shikimate + ATP = 3-phosphoshikimate + ADP + H(+). It carries out the reaction 3-phosphoshikimate + phosphoenolpyruvate = 5-O-(1-carboxyvinyl)-3-phosphoshikimate + phosphate. It functions in the pathway metabolic intermediate biosynthesis; chorismate biosynthesis; chorismate from D-erythrose 4-phosphate and phosphoenolpyruvate: step 2/7. Its pathway is metabolic intermediate biosynthesis; chorismate biosynthesis; chorismate from D-erythrose 4-phosphate and phosphoenolpyruvate: step 3/7. It participates in metabolic intermediate biosynthesis; chorismate biosynthesis; chorismate from D-erythrose 4-phosphate and phosphoenolpyruvate: step 4/7. The protein operates within metabolic intermediate biosynthesis; chorismate biosynthesis; chorismate from D-erythrose 4-phosphate and phosphoenolpyruvate: step 5/7. It functions in the pathway metabolic intermediate biosynthesis; chorismate biosynthesis; chorismate from D-erythrose 4-phosphate and phosphoenolpyruvate: step 6/7. In terms of biological role, the AROM polypeptide catalyzes 5 consecutive enzymatic reactions in prechorismate polyaromatic amino acid biosynthesis. This chain is Pentafunctional AROM polypeptide, found in Uncinocarpus reesii (strain UAMH 1704).